A 202-amino-acid polypeptide reads, in one-letter code: Large ribosomal subunit protein bL17 (202 aa).

The interval 148 to 202 is disordered; it reads DEAPAAESTDAAQVEAGGVEQPDTLPDADAPATADEGVEVDAAEVDPSDEKKDQA. Residues 169 to 182 show a composition bias toward low complexity; the sequence is PDTLPDADAPATAD. A compositionally biased stretch (acidic residues) spans 183–194; that stretch reads EGVEVDAAEVDP.

This sequence belongs to the bacterial ribosomal protein bL17 family. Part of the 50S ribosomal subunit. Contacts protein L32.

The polypeptide is Large ribosomal subunit protein bL17 (Kineococcus radiotolerans (strain ATCC BAA-149 / DSM 14245 / SRS30216)).